A 362-amino-acid polypeptide reads, in one-letter code: Phosphoserine aminotransferase (362 aa).

Positions 9 and 42 each coordinate L-glutamate. Residues G76 to R77, W102, T153, D174, and Q197 contribute to the pyridoxal 5'-phosphate site. An N6-(pyridoxal phosphate)lysine modification is found at K198. N239 to T240 is a binding site for pyridoxal 5'-phosphate.

The protein belongs to the class-V pyridoxal-phosphate-dependent aminotransferase family. SerC subfamily. In terms of assembly, homodimer. Pyridoxal 5'-phosphate serves as cofactor.

The protein resides in the cytoplasm. The enzyme catalyses O-phospho-L-serine + 2-oxoglutarate = 3-phosphooxypyruvate + L-glutamate. It carries out the reaction 4-(phosphooxy)-L-threonine + 2-oxoglutarate = (R)-3-hydroxy-2-oxo-4-phosphooxybutanoate + L-glutamate. The protein operates within amino-acid biosynthesis; L-serine biosynthesis; L-serine from 3-phospho-D-glycerate: step 2/3. It participates in cofactor biosynthesis; pyridoxine 5'-phosphate biosynthesis; pyridoxine 5'-phosphate from D-erythrose 4-phosphate: step 3/5. In terms of biological role, catalyzes the reversible conversion of 3-phosphohydroxypyruvate to phosphoserine and of 3-hydroxy-2-oxo-4-phosphonooxybutanoate to phosphohydroxythreonine. The chain is Phosphoserine aminotransferase from Escherichia coli O6:K15:H31 (strain 536 / UPEC).